The following is a 399-amino-acid chain: Elongation factor Tu (399 aa).

The 195-residue stretch at 10–204 (KPHVNIGTIG…AVDASIPEPE (195 aa)) folds into the tr-type G domain. A G1 region spans residues 19-26 (GHVDHGKT). GTP is bound at residue 19 to 26 (GHVDHGKT). A Mg(2+)-binding site is contributed by Thr-26. A G2 region spans residues 60–64 (GITIN). A G3 region spans residues 81-84 (DCPG). GTP contacts are provided by residues 81 to 85 (DCPGH) and 136 to 139 (NKCD). The tract at residues 136 to 139 (NKCD) is G4. A G5 region spans residues 174–176 (SGL).

This sequence belongs to the TRAFAC class translation factor GTPase superfamily. Classic translation factor GTPase family. EF-Tu/EF-1A subfamily. Monomer.

It localises to the cytoplasm. It carries out the reaction GTP + H2O = GDP + phosphate + H(+). GTP hydrolase that promotes the GTP-dependent binding of aminoacyl-tRNA to the A-site of ribosomes during protein biosynthesis. This Prochlorococcus marinus (strain MIT 9215) protein is Elongation factor Tu.